The following is a 217-amino-acid chain: Uracil-DNA glycosylase (217 aa).

Aspartate 62 serves as the catalytic Proton acceptor.

The protein belongs to the uracil-DNA glycosylase (UDG) superfamily. UNG family.

It localises to the cytoplasm. It catalyses the reaction Hydrolyzes single-stranded DNA or mismatched double-stranded DNA and polynucleotides, releasing free uracil.. In terms of biological role, excises uracil residues from the DNA which can arise as a result of misincorporation of dUMP residues by DNA polymerase or due to deamination of cytosine. The protein is Uracil-DNA glycosylase of Streptococcus equi subsp. zooepidemicus (strain H70).